A 78-amino-acid polypeptide reads, in one-letter code: Small integral membrane protein 1 (78 aa).

N-acetylmethionine is present on M1. A disordered region spans residues 1–22; it reads MQSQESGVHYSRWDSSSRDEVS. The Cytoplasmic segment spans residues 1-48; sequence MQSQESGVHYSRWDSSSRDEVSMTAMSSSEEASCYRRISQKLCSGKLG. 4 positions are modified to phosphoserine: S6, S17, S22, and S27. A compositionally biased stretch (basic and acidic residues) spans 11-21; that stretch reads SRWDSSSRDEV. A helical; Signal-anchor for type II membrane protein membrane pass occupies residues 49–69; it reads IAMKVLGGVALFWIIFILGYI. Over 70 to 78 the chain is Extracellular; the sequence is TGYYVHKCK.

The protein belongs to the SMIM1 family. Homooligomer; disulfide-linked.

The protein localises to the cell membrane. Its function is as follows. Regulator of red blood cell formation. This Mus musculus (Mouse) protein is Small integral membrane protein 1.